A 70-amino-acid polypeptide reads, in one-letter code: Non-histone chromosomal protein H6 (70 aa).

A disordered region spans residues 1–70; that stretch reads MPKRKSATKG…AAGDGAGNAK (70 aa). Basic residues predominate over residues 30–45; it reads AKPKKAAAPKKAVKGK. The segment covering 46–57 has biased composition (basic and acidic residues); sequence KAAENGDAKAEA.

This sequence belongs to the HMGN family.

It is found in the nucleus. It localises to the secreted. Non-histone protein that probably binds to the inner side of nucleosomal DNA, altering the association between the DNA and the nucleosome octamer. In terms of biological role, oncorhyncin III has antibacterial activity against Gram-positive and Gram-negative bacteria at submicromolar concentrations. This chain is Non-histone chromosomal protein H6, found in Oncorhynchus mykiss (Rainbow trout).